Reading from the N-terminus, the 381-residue chain is GDP-mannose-dependent alpha-(1-6)-phosphatidylinositol dimannoside mannosyltransferase (381 aa).

Substrate contacts are provided by residues G16, R207, 211–212 (EK), 283–287 (ETFGL), and E291.

Belongs to the glycosyltransferase group 1 family. Glycosyltransferase 4 subfamily.

Its pathway is phospholipid metabolism; phosphatidylinositol metabolism. Catalyzes the addition of a mannose residue from GDP-D-mannose to the position 6 of the alpha-1,6-linked mannose residue of the triacyl phosphatidylinositol dimannoside (Ac3PIM2) to generate triacyl phosphatidylinositol trimannoside (Ac3PIM3). This Mycobacterium tuberculosis (strain ATCC 25177 / H37Ra) protein is GDP-mannose-dependent alpha-(1-6)-phosphatidylinositol dimannoside mannosyltransferase (pimC).